Here is a 217-residue protein sequence, read N- to C-terminus: Proteasome subunit beta type-9 (217 aa).

A propeptide spans 1–18 (MLGEEAEPQWISEEVKTG) (removed in mature form). T19 functions as the Nucleophile in the catalytic mechanism.

The protein belongs to the peptidase T1B family. In terms of assembly, the 26S proteasome consists of a 20S proteasome core and two 19S regulatory subunits. The 20S proteasome core is composed of 28 subunits that are arranged in four stacked rings, resulting in a barrel-shaped structure. The two end rings are each formed by seven alpha subunits, and the two central rings are each formed by seven beta subunits. The catalytic chamber with the active sites is on the inside of the barrel. Component of the immunoproteasome, where it displaces the equivalent housekeeping subunit PSMB6. In terms of processing, autocleaved. The resulting N-terminal Thr residue of the mature subunit is responsible for the nucleophile proteolytic activity.

The protein localises to the cytoplasm. It localises to the nucleus. The enzyme catalyses Cleavage of peptide bonds with very broad specificity.. The proteasome is a multicatalytic proteinase complex which is characterized by its ability to cleave peptides with Arg, Phe, Tyr, Leu, and Glu adjacent to the leaving group at neutral or slightly basic pH. The proteasome has an ATP-dependent proteolytic activity. This subunit is involved in antigen processing to generate class I binding peptides. In Oryzias latipes (Japanese rice fish), this protein is Proteasome subunit beta type-9 (psmb9).